The chain runs to 234 residues: UPF0502 protein Reut_B4455 (234 aa).

Belongs to the UPF0502 family.

In Cupriavidus pinatubonensis (strain JMP 134 / LMG 1197) (Cupriavidus necator (strain JMP 134)), this protein is UPF0502 protein Reut_B4455.